The sequence spans 729 residues: Fatty acid oxidation complex subunit alpha (729 aa).

An enoyl-CoA hydratase/isomerase region spans residues 1–189; that stretch reads MLYQSETLQL…KVGLVDAVVA (189 aa). Position 296 (D296) interacts with substrate. The tract at residues 311–729 is 3-hydroxyacyl-CoA dehydrogenase; that stretch reads SAPKQAAVLG…LLDVSISQPA (419 aa). NAD(+) is bound by residues M324, D343, 400–402, K407, and S429; that span reads VVE. H450 functions as the For 3-hydroxyacyl-CoA dehydrogenase activity in the catalytic mechanism. N453 contacts NAD(+). Substrate-binding residues include N500 and Y660.

In the N-terminal section; belongs to the enoyl-CoA hydratase/isomerase family. This sequence in the C-terminal section; belongs to the 3-hydroxyacyl-CoA dehydrogenase family. Heterotetramer of two alpha chains (FadB) and two beta chains (FadA).

The catalysed reaction is a (3S)-3-hydroxyacyl-CoA + NAD(+) = a 3-oxoacyl-CoA + NADH + H(+). It catalyses the reaction a (3S)-3-hydroxyacyl-CoA = a (2E)-enoyl-CoA + H2O. The enzyme catalyses a 4-saturated-(3S)-3-hydroxyacyl-CoA = a (3E)-enoyl-CoA + H2O. It carries out the reaction (3S)-3-hydroxybutanoyl-CoA = (3R)-3-hydroxybutanoyl-CoA. The catalysed reaction is a (3Z)-enoyl-CoA = a 4-saturated (2E)-enoyl-CoA. It catalyses the reaction a (3E)-enoyl-CoA = a 4-saturated (2E)-enoyl-CoA. It participates in lipid metabolism; fatty acid beta-oxidation. Functionally, involved in the aerobic and anaerobic degradation of long-chain fatty acids via beta-oxidation cycle. Catalyzes the formation of 3-oxoacyl-CoA from enoyl-CoA via L-3-hydroxyacyl-CoA. It can also use D-3-hydroxyacyl-CoA and cis-3-enoyl-CoA as substrate. The chain is Fatty acid oxidation complex subunit alpha from Yersinia enterocolitica serotype O:8 / biotype 1B (strain NCTC 13174 / 8081).